Consider the following 1402-residue polypeptide: Phospholipid-transporting ATPase dnf2 (1402 aa).

4 helical membrane-spanning segments follow: residues 109–129 (FQNVANLFFLFLVILQSISIF), 135–155 (PGLAAVPLIVVVGITAVKDAI), 457–477 (LNFIILFSMCFVCAVVEGIAW), and 501–521 (VVTFFTGVILFQNLVPISLYI). D569 serves as the catalytic 4-aspartylphosphate intermediate. Positions 569, 570, 571, 700, 741, 743, 746, 764, 799, 800, 879, 880, 881, 986, and 992 each coordinate ATP. A Mg(2+)-binding site is contributed by D569. T571 serves as a coordination point for Mg(2+). Residue D1012 coordinates Mg(2+). 2 residues coordinate ATP: N1015 and D1016. Mg(2+) is bound at residue D1016. Transmembrane regions (helical) follow at residues 1066–1086 (VAEMVNNFFYKSVVWTFTLFW), 1101–1121 (YTYVMLFNLIFSSLPVIVMGV), 1151–1171 (IFIGYMLDGFYQSVICFFFSF), 1193–1213 (LGVYVAAPTIMVVDTYVILNQ), 1218–1238 (VFSIGLWALSCLTFWFWTGVY), and 1260–1280 (FWAVLCGTIVSCLFPKFLFMT). A 1,2-diacyl-sn-glycero-3-phospho-L-serine is bound at residue K1275.

The protein belongs to the cation transport ATPase (P-type) (TC 3.A.3) family. Type IV subfamily. The cofactor is Mg(2+).

The protein resides in the cell membrane. It localises to the endoplasmic reticulum membrane. The catalysed reaction is ATP + H2O + phospholipidSide 1 = ADP + phosphate + phospholipidSide 2.. It carries out the reaction a 1,2-diacyl-sn-glycero-3-phosphoethanolamine(out) + ATP + H2O = a 1,2-diacyl-sn-glycero-3-phosphoethanolamine(in) + ADP + phosphate + H(+). The enzyme catalyses a 1,2-diacyl-sn-glycero-3-phosphocholine(out) + ATP + H2O = a 1,2-diacyl-sn-glycero-3-phosphocholine(in) + ADP + phosphate + H(+). It catalyses the reaction a beta-D-glucosyl-(1&lt;-&gt;1')-N-acylsphing-4-enine(out) + ATP + H2O = a beta-D-glucosyl-(1&lt;-&gt;1')-N-acylsphing-4-enine(in) + ADP + phosphate + H(+). The catalysed reaction is a 1,2-diacyl-sn-glycero-3-phospho-L-serine(out) + ATP + H2O = a 1,2-diacyl-sn-glycero-3-phospho-L-serine(in) + ADP + phosphate + H(+). Functionally, catalytic component of a P4-ATPase flippase complex which catalyzes the hydrolysis of ATP coupled to the transport of glucosylceramide, phosphatidylcholine, phosphatidylethanolamine, and small amounts of phosphatidylserine from the lumenal to the cytosolic leaflet of the cell membrane and ensures the maintenance of asymmetric distribution of phospholipids. In Schizosaccharomyces pombe (strain 972 / ATCC 24843) (Fission yeast), this protein is Phospholipid-transporting ATPase dnf2.